Here is a 30-residue protein sequence, read N- to C-terminus: rRNA N-glycosylase (30 aa).

Belongs to the ribosome-inactivating protein family. Type 1 RIP subfamily. As to expression, expressed in seeds.

The enzyme catalyses Endohydrolysis of the N-glycosidic bond at one specific adenosine on the 28S rRNA.. Its function is as follows. Exhibits N-glycosylase activity. Catalyzes the release of one adenine from a ribosome. Acts as a ribosome-inactivating protein and inhibits protein synthesis in a rabbit-reticulocyte lysate system and in various cell lines (in vitro). The polypeptide is rRNA N-glycosylase (Saponaria ocymoides (Rock soapwort)).